Reading from the N-terminus, the 627-residue chain is Zinc cluster transcription factor acuM (627 aa).

Disordered regions lie at residues Met-1–Pro-40, Asn-129–Glu-148, Ala-155–Val-193, Cys-225–Ala-258, Pro-277–Leu-305, and Ala-394–Thr-416. Residues Met-162–Ser-171 show a composition bias toward polar residues. The zn(2)-C6 fungal-type DNA-binding region spans Cys-197 to Cys-225. Over residues Cys-225 to Ser-251 the composition is skewed to basic and acidic residues. The span at Ser-286 to Leu-305 shows a compositional bias: polar residues. Residues Ala-394–Gln-403 show a composition bias toward low complexity. The span at Pro-404–Thr-416 shows a compositional bias: polar residues.

Its subcellular location is the nucleus. In terms of biological role, transcription factor that governs genes involved in reductive and siderophore-mediated iron acquisition, and carbon metabolism. Suppresses the expression of sreA and induces hapX to stimulate expression of genes involved in both reductive iron assimilation and siderophore-mediated iron uptake which is essential for the maximal virulence. Also regulates genes involved in gluconeogenesis. The protein is Zinc cluster transcription factor acuM of Aspergillus fumigatus (strain ATCC MYA-4609 / CBS 101355 / FGSC A1100 / Af293) (Neosartorya fumigata).